A 712-amino-acid chain; its full sequence is MREPALAASAMAYHPFHAPRPADFPMSAFLAAAQPSFFPALALPPGALAKPLPDPGLAGAAAAAAAAAAAAEAGLHVSALGPHPPAAHLRSLKSLEPEDEVEDDPKVTLEAKELWDQFHKLGTEMVITKSGRRMFPPFKVRVSGLDKKAKYILLMDIVAADDCRYKFHNSRWMVAGKADPEMPKRMYIHPDSPATGEQWMAKPVAFHKLKLTNNISDKHGFTILNSMHKYQPRFHIVRANDILKLPYSTFRTYVFPETDFIAVTAYQNDKITQLKIDNNPFAKGFRDTGNGRREKRKQLTLPSLRLYEEHCKPERDGAESDASSCDPAPAREPPASPGSAPSPLRLHRTRADEKCAADSDPEPERLSEERAGPALGRSPGLDGGSPPRLTEPERARERRSPERGKEPAESGGDGPFGLRSLEKERAEARRKDDGRKEAGEGKEPGLAPLVVQTDSASPLGAGHLPGLAFSGHLHGQQFFGPLGAGQPLFLHPGQFAMGPGAFSAMGMGHLLASVAGGGGGGGGGGPGTATGLDAGGLGPAASAASTPAPFPFHLSQHMLASQGIPMPTFGGLFPYPYTYMAAAAAAASALPATSAAAAAAAAAGSLSRSHFLGSARPRLRFSPYQIPVTIPPSTSLLTTGLAAEGSKAAGSNSREPSPLPELALRKVGAPSRGALSPSGSAKEAASELQSIQRLVSGLENQRALSPGRESPK.

The T-box DNA-binding region spans 109 to 287; sequence LEAKELWDQF…NNPFAKGFRD (179 aa). Positions 313 to 449 are disordered; the sequence is PERDGAESDA…EGKEPGLAPL (137 aa). 3 positions are modified to phosphoserine: S336, S342, and S359. Composition is skewed to basic and acidic residues over residues 349–371, 390–408, and 420–443; these read TRAD…EERA, TEPE…KEPA, and SLEK…EGKE. Residues 517–601 are repression domain 1 (RD1); that stretch reads GGGGGGGGGP…ATSAAAAAAA (85 aa). Phosphoserine occurs at positions 622, 653, 657, and 676. Disordered regions lie at residues 642–661 and 666–688; these read AAEG…PLPE and KVGA…ASEL.

Binds DNA as a monomer. Interacts with PML (isoform PML-2, isoform PML-3 and isoform PML-4).

It localises to the nucleus. Transcription factor which acts as a transcriptional repressor. May also function as a transcriptional activator. Binds to the palindromic T site 5'-TTCACACCTAGGTGTGAA-3' DNA sequence, or a half-site, which are present in the regulatory region of several genes. Required for cardiac atrioventricular canal formation. May cooperate with NKX2.5 to negatively modulate expression of NPPA/ANF in the atrioventricular canal. May play a role as a positive regulator of TGFB2 expression, perhaps acting in concert with GATA4 in the developing outflow tract myocardium. Plays a role in limb pattern formation. Acts as a transcriptional repressor of ADAM10 gene expression, perhaps in concert with histone deacetylase HDAC1 as cofactor. Involved in branching morphogenesis in both developing lungs and adult mammary glands, via negative modulation of target genes; acting redundantly with TBX3. Required, together with TBX3, to maintain cell proliferation in the embryonic lung mesenchyme; perhaps acting downstream of SHH, BMP and TGFbeta signaling. Involved in modulating early inner ear development, acting independently of, and also redundantly with TBX3, in different subregions of the developing ear. Acts as a negative regulator of PML function in cellular senescence. Acts as a negative regulator of expression of CDKN1A/p21, IL33 and CCN4; repression of CDKN1A is enhanced in response to UV-induced stress, perhaps as a result of phosphorylation by p38 MAPK. Negatively modulates expression of CDKN2A/p14ARF and CDH1/E-cadherin. Plays a role in induction of the epithelial-mesenchymal transition (EMT). Plays a role in melanocyte proliferation, perhaps via regulation of cyclin CCND1. Involved in melanogenesis, acting via negative modulation of expression of DHICA oxidase/TYRP1 and P protein/OCA2. Involved in regulating retinal pigment epithelium (RPE) cell proliferation, perhaps via negatively modulating transcription of the transcription factor CEBPD. The polypeptide is T-box transcription factor TBX2 (TBX2) (Canis lupus familiaris (Dog)).